A 640-amino-acid chain; its full sequence is tRNA-dihydrouridine(47) synthase [NAD(P)(+)]-like (640 aa).

Residues 1 to 11 (MAESEGSNTEN) show a composition bias toward polar residues. Disordered regions lie at residues 1–23 (MAESEGSNTENGKVGAVKSENLD) and 43–123 (FIDA…HSQF). Basic and acidic residues predominate over residues 43–57 (FIDADGKDVTEKETC). Residues 58-72 (SELSLNDAENTTRTE) are compositionally biased toward polar residues. Residues 77–86 (PEAKRIKLDD) are compositionally biased toward basic and acidic residues. A compositionally biased stretch (basic residues) spans 104-120 (EKKRARGQNKSRPHMKH). 2 consecutive C3H1-type zinc fingers follow at residues 123 to 153 (FEENKLCPSVTQECASKCFFGDKCKFSHDVA) and 161 to 191 (EDIRPNCHLYETFGKCIYGVTCRFAKSHLGE). FMN is bound by residues 301-303 (PLT) and Gln355. The active-site Proton donor is the Cys386. FMN-binding positions include Lys425, His455, 487 to 489 (NGD), and 510 to 511 (AR).

Belongs to the Dus family. Dus3 subfamily. Requires FMN as cofactor.

The catalysed reaction is 5,6-dihydrouridine(47) in tRNA + NAD(+) = uridine(47) in tRNA + NADH + H(+). It carries out the reaction 5,6-dihydrouridine(47) in tRNA + NADP(+) = uridine(47) in tRNA + NADPH + H(+). It catalyses the reaction a 5,6-dihydrouridine in mRNA + NAD(+) = a uridine in mRNA + NADH + H(+). The enzyme catalyses a 5,6-dihydrouridine in mRNA + NADP(+) = a uridine in mRNA + NADPH + H(+). Functionally, catalyzes the synthesis of dihydrouridine, a modified base, in various RNAs, such as tRNAs, mRNAs and some long non-coding RNAs (lncRNAs). Mainly modifies the uridine in position 47 (U47) in the D-loop of most cytoplasmic tRNAs. Also able to mediate the formation of dihydrouridine in some mRNAs, thereby regulating their translation. This is tRNA-dihydrouridine(47) synthase [NAD(P)(+)]-like (dus3l) from Xenopus laevis (African clawed frog).